The chain runs to 597 residues: DNA mismatch repair protein MutL (597 aa).

Belongs to the DNA mismatch repair MutL/HexB family.

This protein is involved in the repair of mismatches in DNA. It is required for dam-dependent methyl-directed DNA mismatch repair. May act as a 'molecular matchmaker', a protein that promotes the formation of a stable complex between two or more DNA-binding proteins in an ATP-dependent manner without itself being part of a final effector complex. In Rhodopseudomonas palustris (strain BisB5), this protein is DNA mismatch repair protein MutL.